Consider the following 321-residue polypeptide: Transaldolase (321 aa).

Residue Lys132 is the Schiff-base intermediate with substrate of the active site.

It belongs to the transaldolase family. Type 1 subfamily. In terms of assembly, homodimer.

It is found in the cytoplasm. It carries out the reaction D-sedoheptulose 7-phosphate + D-glyceraldehyde 3-phosphate = D-erythrose 4-phosphate + beta-D-fructose 6-phosphate. Its pathway is carbohydrate degradation; pentose phosphate pathway; D-glyceraldehyde 3-phosphate and beta-D-fructose 6-phosphate from D-ribose 5-phosphate and D-xylulose 5-phosphate (non-oxidative stage): step 2/3. Functionally, transaldolase is important for the balance of metabolites in the pentose-phosphate pathway. The polypeptide is Transaldolase (Rhizobium etli (strain CIAT 652)).